A 352-amino-acid chain; its full sequence is Bifunctional protein FolD 1, mitochondrial (352 aa).

A mitochondrion-targeting transit peptide spans 1–23 (MLMIARKALASAHTKAFRLATRD).

Belongs to the tetrahydrofolate dehydrogenase/cyclohydrolase family. In terms of assembly, homodimer.

It is found in the mitochondrion. It catalyses the reaction (6R)-5,10-methylene-5,6,7,8-tetrahydrofolate + NADP(+) = (6R)-5,10-methenyltetrahydrofolate + NADPH. The enzyme catalyses (6R)-5,10-methenyltetrahydrofolate + H2O = (6R)-10-formyltetrahydrofolate + H(+). Its pathway is one-carbon metabolism; tetrahydrofolate interconversion. Catalyzes the oxidation of 5,10-methylenetetrahydrofolate to 5,10-methenyltetrahydrofolate and then the hydrolysis of 5,10-methenyltetrahydrofolate to 10-formyltetrahydrofolate. This chain is Bifunctional protein FolD 1, mitochondrial (FOLD1), found in Arabidopsis thaliana (Mouse-ear cress).